The following is a 319-amino-acid chain: Beta-ketoacyl-[acyl-carrier-protein] synthase III (319 aa).

Catalysis depends on residues cysteine 112 and histidine 246. Residues 247–251 (QANFR) form an ACP-binding region. The active site involves asparagine 276.

This sequence belongs to the thiolase-like superfamily. FabH family. Homodimer.

Its subcellular location is the cytoplasm. The enzyme catalyses malonyl-[ACP] + acetyl-CoA + H(+) = 3-oxobutanoyl-[ACP] + CO2 + CoA. Its pathway is lipid metabolism; fatty acid biosynthesis. Its function is as follows. Catalyzes the condensation reaction of fatty acid synthesis by the addition to an acyl acceptor of two carbons from malonyl-ACP. Catalyzes the first condensation reaction which initiates fatty acid synthesis and may therefore play a role in governing the total rate of fatty acid production. Possesses both acetoacetyl-ACP synthase and acetyl transacylase activities. Its substrate specificity determines the biosynthesis of branched-chain and/or straight-chain of fatty acids. The sequence is that of Beta-ketoacyl-[acyl-carrier-protein] synthase III from Pseudoalteromonas atlantica (strain T6c / ATCC BAA-1087).